The following is a 199-amino-acid chain: Peptidyl-tRNA hydrolase (199 aa).

Y15 contacts tRNA. H20 serves as the catalytic Proton acceptor. TRNA is bound by residues Y66, N68, and N114.

The protein belongs to the PTH family. Monomer.

It is found in the cytoplasm. The catalysed reaction is an N-acyl-L-alpha-aminoacyl-tRNA + H2O = an N-acyl-L-amino acid + a tRNA + H(+). Hydrolyzes ribosome-free peptidyl-tRNAs (with 1 or more amino acids incorporated), which drop off the ribosome during protein synthesis, or as a result of ribosome stalling. Functionally, catalyzes the release of premature peptidyl moieties from peptidyl-tRNA molecules trapped in stalled 50S ribosomal subunits, and thus maintains levels of free tRNAs and 50S ribosomes. In Burkholderia multivorans (strain ATCC 17616 / 249), this protein is Peptidyl-tRNA hydrolase.